Here is a 134-residue protein sequence, read N- to C-terminus: MENWTNEIWVAIGIAFIVGLFIGYIIVRLTKGSVKHQAKTEAELKTVKTQLDTQKAQIEKHFAESAELFKTLINDYQKLYRHYATSSNNLLGEKDQKGLFTQQLITATDKSQNEQPRDYSEGASGLFKENKEEN.

A helical membrane pass occupies residues 7–27 (EIWVAIGIAFIVGLFIGYIIV). Positions 107–134 (ATDKSQNEQPRDYSEGASGLFKENKEEN) are disordered. Residues 111–120 (SQNEQPRDYS) show a composition bias toward basic and acidic residues.

The protein belongs to the ZapG family.

It localises to the cell inner membrane. Involved in cell division, cell envelope biogenesis and cell shape maintenance. This chain is Z-ring associated protein G, found in Haemophilus influenzae (strain ATCC 51907 / DSM 11121 / KW20 / Rd).